The sequence spans 448 residues: Probable glycine dehydrogenase (decarboxylating) subunit 1 (448 aa).

The protein belongs to the GcvP family. N-terminal subunit subfamily. The glycine cleavage system is composed of four proteins: P, T, L and H. In this organism, the P 'protein' is a heterodimer of two subunits.

It catalyses the reaction N(6)-[(R)-lipoyl]-L-lysyl-[glycine-cleavage complex H protein] + glycine + H(+) = N(6)-[(R)-S(8)-aminomethyldihydrolipoyl]-L-lysyl-[glycine-cleavage complex H protein] + CO2. In terms of biological role, the glycine cleavage system catalyzes the degradation of glycine. The P protein binds the alpha-amino group of glycine through its pyridoxal phosphate cofactor; CO(2) is released and the remaining methylamine moiety is then transferred to the lipoamide cofactor of the H protein. This is Probable glycine dehydrogenase (decarboxylating) subunit 1 from Lysinibacillus sphaericus (strain C3-41).